A 292-amino-acid polypeptide reads, in one-letter code: MRLDVITIFPEYLDPLRHALLGKAIEKDLLSVGVHDLRLWAEDAHKSVDDSPFGGGPGMVMKPTVWGPALDDVATMSGKAHMGAQLDSARVHVDKPRHDELEGIQFAGYDAAEVAEADKPLLLVPTPAGAPFTQEDARAWSNEEHIVFACGRYEGIDQRVIEDAKKTYRVREVSIGDYVLIGGEVAVLVIAEAVVRLIPGVLGNTQSHQDDSFSDGLLEGPSYTKPREWRGLEVPEVLTSGNHAKIERWRREQSLKRTWEVRPELLDGMELDRHDQAYVEGLRRGNTSDNLN.

Residues glycine 151 and 175 to 180 (IGDYVL) contribute to the S-adenosyl-L-methionine site.

It belongs to the RNA methyltransferase TrmD family. In terms of assembly, homodimer.

It is found in the cytoplasm. The catalysed reaction is guanosine(37) in tRNA + S-adenosyl-L-methionine = N(1)-methylguanosine(37) in tRNA + S-adenosyl-L-homocysteine + H(+). Specifically methylates guanosine-37 in various tRNAs. This Corynebacterium diphtheriae (strain ATCC 700971 / NCTC 13129 / Biotype gravis) protein is tRNA (guanine-N(1)-)-methyltransferase.